A 787-amino-acid polypeptide reads, in one-letter code: uncharacterized protein (787 aa).

Positions 1–22 (MKFKYCAIFFSGFLGLSAILAA) are cleaved as a signal peptide. Cys-23 carries N-palmitoyl cysteine lipidation. Cys-23 is lipidated: S-diacylglycerol cysteine. Disordered stretches follow at residues 178 to 270 (SDNV…DNKI) and 473 to 495 (KSKE…KKES). Residues 181 to 208 (VKVSQRTGETTQKSKVTNPLKINTQNDP) show a composition bias toward polar residues. Basic and acidic residues predominate over residues 209 to 219 (ATKDLWEKIEA). Residues 242–261 (SSSSSLVNLKQSTDQTTTDD) are compositionally biased toward low complexity.

The protein belongs to the MG185/MG260 family.

It is found in the cell membrane. This is an uncharacterized protein from Mycoplasma pneumoniae (strain ATCC 29342 / M129 / Subtype 1) (Mycoplasmoides pneumoniae).